The sequence spans 201 residues: Recombination protein RecR (201 aa).

The C4-type zinc finger occupies 60–75 (CSRCGNVDTVDPCIVC). A Toprim domain is found at 83–178 (SVIIVVEDVS…KITRLAHGVP (96 aa)).

The protein belongs to the RecR family.

In terms of biological role, may play a role in DNA repair. It seems to be involved in an RecBC-independent recombinational process of DNA repair. It may act with RecF and RecO. The chain is Recombination protein RecR from Rhizobium johnstonii (strain DSM 114642 / LMG 32736 / 3841) (Rhizobium leguminosarum bv. viciae).